A 142-amino-acid chain; its full sequence is Trafficking protein particle complex subunit 1 (142 aa).

The protein belongs to the TRAPP small subunits family. BET5 subfamily. As to quaternary structure, part of the multisubunit TRAPP (transport protein particle) complex.

It is found in the golgi apparatus. Its subcellular location is the cis-Golgi network. The protein resides in the endoplasmic reticulum. Functionally, may play a role in vesicular transport from endoplasmic reticulum to Golgi. This chain is Trafficking protein particle complex subunit 1 (trappc1-1), found in Dictyostelium discoideum (Social amoeba).